The sequence spans 292 residues: Phosphoribosylaminoimidazole-succinocarboxamide synthase (292 aa).

Belongs to the SAICAR synthetase family.

The catalysed reaction is 5-amino-1-(5-phospho-D-ribosyl)imidazole-4-carboxylate + L-aspartate + ATP = (2S)-2-[5-amino-1-(5-phospho-beta-D-ribosyl)imidazole-4-carboxamido]succinate + ADP + phosphate + 2 H(+). Its pathway is purine metabolism; IMP biosynthesis via de novo pathway; 5-amino-1-(5-phospho-D-ribosyl)imidazole-4-carboxamide from 5-amino-1-(5-phospho-D-ribosyl)imidazole-4-carboxylate: step 1/2. The polypeptide is Phosphoribosylaminoimidazole-succinocarboxamide synthase (Thermodesulfovibrio yellowstonii (strain ATCC 51303 / DSM 11347 / YP87)).